We begin with the raw amino-acid sequence, 92 residues long: Large ribosomal subunit protein bL28 (92 aa).

The tract at residues 1–34 (MGRECEITGKKTMFGNNVPRKGLSRKKGGGGQHI) is disordered.

It belongs to the bacterial ribosomal protein bL28 family.

The protein is Large ribosomal subunit protein bL28 of Borrelia turicatae (strain 91E135).